The following is a 640-amino-acid chain: Isoniazid-induced protein IniA (640 aa).

The helical transmembrane segment at 497–519 (IGMLSSVVGLGLFNPLSVGAGLI) threads the bilayer. Residues 560–628 (RDRLKMIQRL…QVNDNLAGLE (69 aa)) are a coiled coil.

Forms multimeric structures containing a central pore.

The protein resides in the cell membrane. Functionally, participates in the development of tolerance to both isoniazid and ethambutol. May function through a MDR-pump like mechanism, although it does not appear to directly transport isoniazid from the cell. This is Isoniazid-induced protein IniA (iniA) from Mycobacterium tuberculosis (strain CDC 1551 / Oshkosh).